A 232-amino-acid polypeptide reads, in one-letter code: Ribonuclease 3 (232 aa).

The 130-residue stretch at 5–134 folds into the RNase III domain; sequence QTVLKNHFAI…FLGALLLDKD (130 aa). E47 lines the Mg(2+) pocket. D51 is an active-site residue. Mg(2+)-binding residues include D120 and E123. Residue E123 is part of the active site. Residues 160-229 form the DRBM domain; that stretch reads DYKTHLQELL…AKNAVEKGLD (70 aa).

It belongs to the ribonuclease III family. Homodimer. It depends on Mg(2+) as a cofactor.

It is found in the cytoplasm. It catalyses the reaction Endonucleolytic cleavage to 5'-phosphomonoester.. In terms of biological role, digests double-stranded RNA. Involved in the processing of primary rRNA transcript to yield the immediate precursors to the large and small rRNAs (23S and 16S). Processes some mRNAs, and tRNAs when they are encoded in the rRNA operon. Processes pre-crRNA and tracrRNA of type II CRISPR loci if present in the organism. The protein is Ribonuclease 3 of Streptococcus pneumoniae (strain P1031).